Consider the following 338-residue polypeptide: High mobility group B protein 9 (338 aa).

The 92-residue stretch at 38–129 (VKDSSVFWDT…LLFHYEQVHL (92 aa)) folds into the ARID domain. The tract at residues 233 to 259 (TGRRRRRLGKRRRSRRREDPNYPKPNR) is disordered. Basic residues predominate over residues 235–247 (RRRRRLGKRRRSR). Residues 255–322 (PKPNRSGYNF…RYQRELNEYR (68 aa)) constitute a DNA-binding region (HMG box).

Predominantly expressed in leaves, flowers and seedlings.

The protein resides in the nucleus. Binds preferentially DNA with A/T-rich content. Required for karyogamy during female gametophyte development, when the two polar nuclei fuse to form the diploid central cell nucleus. This Arabidopsis thaliana (Mouse-ear cress) protein is High mobility group B protein 9 (HMGB9).